The following is a 53-amino-acid chain: Small ribosomal subunit protein uS14 (53 aa).

The Zn(2+) site is built by Cys17, Cys20, Cys36, and Cys39.

Belongs to the universal ribosomal protein uS14 family. Zinc-binding uS14 subfamily. As to quaternary structure, part of the 30S ribosomal subunit. Zn(2+) is required as a cofactor.

In terms of biological role, binds 16S rRNA, required for the assembly of 30S particles. The sequence is that of Small ribosomal subunit protein uS14 from Methanocaldococcus jannaschii (strain ATCC 43067 / DSM 2661 / JAL-1 / JCM 10045 / NBRC 100440) (Methanococcus jannaschii).